The chain runs to 201 residues: MALVPMVVEQTNRGERSYDIYSRLLKERIIFLTGAVEDHMATLVCAQLLFLEAENPKKEIALYINSPGGVVTAGMAIYDTMQFIKPAVSTLCIGQAASMGSLLLAAGHKDMRFATPNSRIMVHQPSGGFQGQASDIERHARDILKMKRRLNEVYVKHTGRTYEEVEKTLDRDHFMDADEAQSWGVIDKVLTSRLEMEGEQA.

The active-site Nucleophile is Ser98. His123 is a catalytic residue.

This sequence belongs to the peptidase S14 family. Fourteen ClpP subunits assemble into 2 heptameric rings which stack back to back to give a disk-like structure with a central cavity, resembling the structure of eukaryotic proteasomes.

It is found in the cytoplasm. It carries out the reaction Hydrolysis of proteins to small peptides in the presence of ATP and magnesium. alpha-casein is the usual test substrate. In the absence of ATP, only oligopeptides shorter than five residues are hydrolyzed (such as succinyl-Leu-Tyr-|-NHMec, and Leu-Tyr-Leu-|-Tyr-Trp, in which cleavage of the -Tyr-|-Leu- and -Tyr-|-Trp bonds also occurs).. Its function is as follows. Cleaves peptides in various proteins in a process that requires ATP hydrolysis. Has a chymotrypsin-like activity. Plays a major role in the degradation of misfolded proteins. This Rhizobium johnstonii (strain DSM 114642 / LMG 32736 / 3841) (Rhizobium leguminosarum bv. viciae) protein is ATP-dependent Clp protease proteolytic subunit 2.